Consider the following 390-residue polypeptide: Lipid-A-disaccharide synthase (390 aa).

This sequence belongs to the LpxB family.

It catalyses the reaction a lipid X + a UDP-2-N,3-O-bis[(3R)-3-hydroxyacyl]-alpha-D-glucosamine = a lipid A disaccharide + UDP + H(+). It participates in bacterial outer membrane biogenesis; LPS lipid A biosynthesis. Condensation of UDP-2,3-diacylglucosamine and 2,3-diacylglucosamine-1-phosphate to form lipid A disaccharide, a precursor of lipid A, a phosphorylated glycolipid that anchors the lipopolysaccharide to the outer membrane of the cell. The chain is Lipid-A-disaccharide synthase from Haemophilus ducreyi (strain 35000HP / ATCC 700724).